The following is a 599-amino-acid chain: Aspartate--tRNA(Asp/Asn) ligase (599 aa).

Residue E172 participates in L-aspartate binding. The segment at Q196 to K199 is aspartate. Position 218 (R218) interacts with L-aspartate. ATP contacts are provided by residues R218–E220 and Q227. An L-aspartate-binding site is contributed by H454. ATP is bound at residue E488. R495 lines the L-aspartate pocket. G540–R543 provides a ligand contact to ATP.

Belongs to the class-II aminoacyl-tRNA synthetase family. Type 1 subfamily. As to quaternary structure, homodimer.

Its subcellular location is the cytoplasm. The enzyme catalyses tRNA(Asx) + L-aspartate + ATP = L-aspartyl-tRNA(Asx) + AMP + diphosphate. Functionally, aspartyl-tRNA synthetase with relaxed tRNA specificity since it is able to aspartylate not only its cognate tRNA(Asp) but also tRNA(Asn). Reaction proceeds in two steps: L-aspartate is first activated by ATP to form Asp-AMP and then transferred to the acceptor end of tRNA(Asp/Asn). The protein is Aspartate--tRNA(Asp/Asn) ligase of Methylibium petroleiphilum (strain ATCC BAA-1232 / LMG 22953 / PM1).